The chain runs to 374 residues: (R)-phenyllactyl-CoA dehydratase beta subunit (374 aa).

This sequence belongs to the FldB/FldC dehydratase alpha/beta subunit family. As to quaternary structure, part of the heterotrimeric phenyllactate dehydratase complex FldABC, composed of (R)-phenyllactate CoA-transferase (FldA) and a heterodimeric (R)-phenyllactyl-CoA dehydratase (FldB and FldC). It depends on [4Fe-4S] cluster as a cofactor. No flavin could be detected in the FldABC complex, and the addition of FAD, FMN or riboflavin to the dehydratase do not increase enzymatic activity. serves as cofactor.

The enzyme catalyses (R)-3-phenyllactoyl-CoA = (E)-cinnamoyl-CoA + H2O. It catalyses the reaction (R)-3-(4-hydroxyphenyl)lactoyl-CoA = (E)-4-coumaroyl-CoA + H2O. It carries out the reaction (R)-3-(indol-3-yl)lactoyl-CoA = (E)-3-(indol-3-yl)acryloyl-CoA + H2O. Its pathway is amino-acid degradation; L-phenylalanine degradation. In terms of biological role, component of the phenyllactate dehydratase complex FldABC that is involved in the fermentation of L-phenylalanine via a Stickland reaction. This complex catalyzes the reversible syn-dehydration of (R)-phenyllactate to (E)-cinnamate in two steps, a CoA-transfer from cinnamoyl-CoA to phenyllactate, catalyzed by FldA, followed by the dehydration of phenyllactyl-CoA to cinnamoyl-CoA, catalyzed by FldB and FldC. Requires the activator FldI to initiate catalysis. This Clostridium sporogenes protein is (R)-phenyllactyl-CoA dehydratase beta subunit.